Consider the following 503-residue polypeptide: Inosine-5'-monophosphate dehydrogenase 1 (503 aa).

Serine 2 bears the N-acetylserine mark. The region spanning 167–225 (MKSCDSSDYCVPWEIDFEKLEFVLEDKQKGFVVLERDGETVNVVTKDDIQRVKGYPKSG) is the CBS domain. NAD(+)-binding positions include 265 to 267 (DSS) and 315 to 317 (GMG). K(+) contacts are provided by glycine 317 and glycine 319. Serine 320 contacts IMP. K(+) is bound at residue cysteine 322. Cysteine 322 acts as the Thioimidate intermediate in catalysis. Residues 355–357 (DGG), 378–379 (GS), and 402–406 (YRGMG) each bind IMP. Arginine 418 (proton acceptor) is an active-site residue. Glutamine 430 lines the IMP pocket. Residues glutamate 489, glycine 490, and glycine 491 each coordinate K(+).

Belongs to the IMPDH/GMPR family. As to quaternary structure, homotetramer. The cofactor is K(+).

The protein localises to the cytoplasm. It catalyses the reaction IMP + NAD(+) + H2O = XMP + NADH + H(+). It functions in the pathway purine metabolism; XMP biosynthesis via de novo pathway; XMP from IMP: step 1/1. Its activity is regulated as follows. Mycophenolic acid (MPA) is a non-competitive inhibitor that prevents formation of the closed enzyme conformation by binding to the same site as the amobile flap. In contrast, mizoribine monophosphate (MZP) is a competitive inhibitor that induces the closed conformation. MPA is a potent inhibitor of mammalian IMPDHs but a poor inhibitor of the bacterial enzymes. MZP is a more potent inhibitor of bacterial IMPDH. Functionally, catalyzes the conversion of inosine 5'-phosphate (IMP) to xanthosine 5'-phosphate (XMP), the first committed and rate-limiting step in the de novo synthesis of guanine nucleotides, and therefore plays an important role in the regulation of cell growth. The chain is Inosine-5'-monophosphate dehydrogenase 1 from Arabidopsis thaliana (Mouse-ear cress).